The sequence spans 306 residues: Pantothenate kinase (306 aa).

91–98 is a binding site for ATP; the sequence is GSVAVGKS.

Belongs to the prokaryotic pantothenate kinase family.

Its subcellular location is the cytoplasm. The enzyme catalyses (R)-pantothenate + ATP = (R)-4'-phosphopantothenate + ADP + H(+). It functions in the pathway cofactor biosynthesis; coenzyme A biosynthesis; CoA from (R)-pantothenate: step 1/5. This Streptococcus pneumoniae serotype 4 (strain ATCC BAA-334 / TIGR4) protein is Pantothenate kinase (coaA).